Here is a 318-residue protein sequence, read N- to C-terminus: Acetyl-coenzyme A carboxylase carboxyl transferase subunit alpha (318 aa).

Positions 41–295 (HLEKKNEELT…KQRILTDLNE (255 aa)) constitute a CoA carboxyltransferase C-terminal domain.

This sequence belongs to the AccA family. Acetyl-CoA carboxylase is a heterohexamer composed of biotin carboxyl carrier protein (AccB), biotin carboxylase (AccC) and two subunits each of ACCase subunit alpha (AccA) and ACCase subunit beta (AccD).

It is found in the cytoplasm. It carries out the reaction N(6)-carboxybiotinyl-L-lysyl-[protein] + acetyl-CoA = N(6)-biotinyl-L-lysyl-[protein] + malonyl-CoA. Its pathway is lipid metabolism; malonyl-CoA biosynthesis; malonyl-CoA from acetyl-CoA: step 1/1. In terms of biological role, component of the acetyl coenzyme A carboxylase (ACC) complex. First, biotin carboxylase catalyzes the carboxylation of biotin on its carrier protein (BCCP) and then the CO(2) group is transferred by the carboxyltransferase to acetyl-CoA to form malonyl-CoA. The protein is Acetyl-coenzyme A carboxylase carboxyl transferase subunit alpha of Tolumonas auensis (strain DSM 9187 / NBRC 110442 / TA 4).